The chain runs to 806 residues: MDFVSIEKKWQEFWHQNESFEPKDDFNLPKKYILSMLPYPSGEIHMGHVRNYTIGDALVRYYRLHHYNVLHPMGFDSFGMPAENAAIKHGIHPKTWTYENIENMQKEFEALGFSFSKNREFATSDPNYTEFEQQFFIDLWEKGLIYRKKAMLNWCPNDKTVLANEQVIEGRCWRCDTEVVQKELYQYYLKITNYAEELLKDLETLKNHWPSQVLLMQKNWIGKSSGLQFRFKIADECLKACNDIQEIEVFTTRADTIYGVTYIAIAPEHPLVEHAIKQVNQEDLKTIKAILNTTPRERTLEKKGAFLGIYAIHPLTKQKIPIWVANFALANYGSGALMGVPACDERDFEFANLYHIPIKVITQSPQNLPHTKEETLKNSGEWSDLPSSVAREKIIAYFEKENLGKRVINYRLQDWGVSRQRYWGAPIPMIHCKNCGIVPETQLPVTLPEDIVIDGEGNPLEKHASWKFTQCPKCHKDALRETDTMDTFIQSSWYFLRYTTPKNQRENQAFDKNYLKYFMPVDTYIGGIEHAILHLLYARFFTKALRDLGYIDLDEPFKQLITQGMVLKDGVKMSKSKGNVVSPKEILKKYGADAARLFILFAAPPAKELEWNDSALEGAHRFIKRLYDKANAINPTTYKPEFKEANLNEAEKLARKKVYEALKKSHEIFNNPESTYAFNTLIASCMEALNALNTQNNERILCEGYFVLLQVLEPMIPHTAWELSERLFKRANFKPITIDESALIEDSMTLALTINGKRRAELKVHINASKEEILALAKKELEKYLENASVKKEIYVPNKLVNFVIA.

The short motif at 38-48 (PYPSGEIHMGH) is the 'HIGH' region element. Residues 572 to 576 (KMSKS) carry the 'KMSKS' region motif. ATP is bound at residue lysine 575.

Belongs to the class-I aminoacyl-tRNA synthetase family.

It localises to the cytoplasm. It catalyses the reaction tRNA(Leu) + L-leucine + ATP = L-leucyl-tRNA(Leu) + AMP + diphosphate. This is Leucine--tRNA ligase from Helicobacter acinonychis (strain Sheeba).